The sequence spans 355 residues: MAIDENKQKALAAALGQIEKQFGKGSIMRLGEDRSMDVETISTGSLSLDIALGAGGLPMGRIVEIYGPESSGKTTLTLQVIAAAQREVKTCAFIDAEHALDPIYAKKLGVDIDNLLCSQPDTGEQALEICDALTRSGAVDVIIVDSVAALTPKAEIEGEIGDSHMGLAARMMSQAMRKLAGNLKNANTLLIFINQIRMKIGVMFGNPETTTGGNALKFYASVRLDIRRIGSVKEGDVVVGSETRVKVVKNKVAAPFKQAEFQIMYGEGINIRGELVDLGVKHKLIEKAGAWYSYNGEKIGQGKANACSFLKDHPEVAAELDKKLRDMLLHSAEGNSLVSDVESEDEGASESNEEF.

67–74 provides a ligand contact to ATP; sequence GPESSGKT. The segment at 335 to 355 is disordered; that stretch reads NSLVSDVESEDEGASESNEEF. Residues 341 to 355 are compositionally biased toward acidic residues; the sequence is VESEDEGASESNEEF.

The protein belongs to the RecA family.

Its subcellular location is the cytoplasm. Its function is as follows. Can catalyze the hydrolysis of ATP in the presence of single-stranded DNA, the ATP-dependent uptake of single-stranded DNA by duplex DNA, and the ATP-dependent hybridization of homologous single-stranded DNAs. It interacts with LexA causing its activation and leading to its autocatalytic cleavage. The polypeptide is Protein RecA (Sodalis glossinidius).